We begin with the raw amino-acid sequence, 118 residues long: Putative pterin-4-alpha-carbinolamine dehydratase (118 aa).

It belongs to the pterin-4-alpha-carbinolamine dehydratase family.

The catalysed reaction is (4aS,6R)-4a-hydroxy-L-erythro-5,6,7,8-tetrahydrobiopterin = (6R)-L-erythro-6,7-dihydrobiopterin + H2O. This is Putative pterin-4-alpha-carbinolamine dehydratase from Azotobacter vinelandii (strain DJ / ATCC BAA-1303).